The chain runs to 204 residues: uncharacterized protein (204 aa).

Positions 1–17 are cleaved as a signal peptide; the sequence is MKRLVTGLLALSLFLAA. A disordered region spans residues 17–100; the sequence is ACGQDSDQQK…NNNQANNNQK (84 aa). Cys-18 carries the N-palmitoyl cysteine lipid modification. A lipid anchor (S-diacylglycerol cysteine) is attached at Cys-18. The span at 23–70 shows a compositional bias: basic and acidic residues; sequence DQQKDGNKEKDDKAKTEQQDKKTNDSSKDKKDNKDDSKDVNKDNKDNS. Residues 71 to 100 are compositionally biased toward low complexity; sequence ANDNQQQSNSNATNNDQNQTNNNQANNNQK.

It localises to the cell membrane. This is an uncharacterized protein from Staphylococcus aureus (strain MSSA476).